Here is a 198-residue protein sequence, read N- to C-terminus: Recombination protein RecR (198 aa).

Residues C57–C72 form a C4-type zinc finger. One can recognise a Toprim domain in the interval G80–P175.

It belongs to the RecR family.

Functionally, may play a role in DNA repair. It seems to be involved in an RecBC-independent recombinational process of DNA repair. It may act with RecF and RecO. The protein is Recombination protein RecR of Desulforudis audaxviator (strain MP104C).